Here is a 536-residue protein sequence, read N- to C-terminus: Velvet complex subunit B (536 aa).

Residues 1–26 show a composition bias toward polar residues; that stretch reads MIQRTTDPAAGSSTSGPPTNSLSWGS. 4 disordered regions span residues 1–27, 106–143, 157–409, and 508–536; these read MIQR…WGSR, PNAA…AIPF, SAPA…RTLV, and KLPL…EESD. One can recognise a Velvet domain in the interval 25-512; that stretch reads GSRHNGKLYT…NQQNMKLPLR (488 aa). Over residues 114-143 the composition is skewed to pro residues; that stretch reads PPMPAKPRRPTNPPPPSNTHGSPPAPAIPF. Low complexity-rich tracts occupy residues 158-170 and 190-265; these read APAS…SASA and PYGP…YPPY. The segment covering 280–305 has biased composition (polar residues); the sequence is TSNFDHSQPVTSSVDQETNSPVVTTT. A compositionally biased stretch (basic and acidic residues) spans 306–315; that stretch reads ARDDDQREGE. Over residues 328-342 the composition is skewed to low complexity; the sequence is PSNSGAPSTSPTAST. Basic and acidic residues predominate over residues 356-399; it reads EEREGPDGGPDLREPIEPGSTKAREEEDARTGTEKGDPKDKSDA. The span at 400 to 409 shows a compositional bias: polar residues; sequence QRATYTRTLV. Residues 511–525 show a composition bias toward basic residues; the sequence is LRNRHGSGSKRRRRG.

This sequence belongs to the velvet family. VelB subfamily. As to quaternary structure, component of the heterotrimeric velvet complex composed of laeA, veA and velB; VeA acting as a bridging protein between laeA and velB. Forms a heterodimeric complex with vosA; the formation of the velB-vosA complex is light-dependent.

Its subcellular location is the nucleus. It localises to the cytoplasm. Functionally, component of the velvet transcription factor complex that controls sexual/asexual developmental ratio in response to light, promoting sexual development in the darkness while stimulating asexual sporulation under illumination. The velvet complex acts as a global regulator for secondary metabolite gene expression. Component of the velB-VosA heterodimeric complex that plays a dual role in activating genes associated with spore maturation and repressing certain development-associated genes. The velB-VosA complex binds DNA through the DNA-binding domain of vosA that recognizes an 11-nucleotide consensus sequence 5'-CTGGCCGCGGC-3' consisting of two motifs in the promoters of key developmental regulatory genes. This Schizophyllum commune (strain H4-8 / FGSC 9210) (Split gill fungus) protein is Velvet complex subunit B.